Consider the following 243-residue polypeptide: Pyridoxine 5'-phosphate synthase (243 aa).

Residue Asn-9 participates in 3-amino-2-oxopropyl phosphate binding. Residue 11-12 (DH) participates in 1-deoxy-D-xylulose 5-phosphate binding. Residue Arg-20 coordinates 3-amino-2-oxopropyl phosphate. His-45 acts as the Proton acceptor in catalysis. 1-deoxy-D-xylulose 5-phosphate contacts are provided by Arg-47 and His-52. Glu-72 serves as the catalytic Proton acceptor. Thr-102 is a binding site for 1-deoxy-D-xylulose 5-phosphate. His-193 acts as the Proton donor in catalysis. Residues Gly-194 and 215-216 (GH) each bind 3-amino-2-oxopropyl phosphate.

This sequence belongs to the PNP synthase family. In terms of assembly, homooctamer; tetramer of dimers.

It localises to the cytoplasm. The catalysed reaction is 3-amino-2-oxopropyl phosphate + 1-deoxy-D-xylulose 5-phosphate = pyridoxine 5'-phosphate + phosphate + 2 H2O + H(+). It functions in the pathway cofactor biosynthesis; pyridoxine 5'-phosphate biosynthesis; pyridoxine 5'-phosphate from D-erythrose 4-phosphate: step 5/5. Its function is as follows. Catalyzes the complicated ring closure reaction between the two acyclic compounds 1-deoxy-D-xylulose-5-phosphate (DXP) and 3-amino-2-oxopropyl phosphate (1-amino-acetone-3-phosphate or AAP) to form pyridoxine 5'-phosphate (PNP) and inorganic phosphate. The protein is Pyridoxine 5'-phosphate synthase of Shigella sonnei (strain Ss046).